The sequence spans 398 residues: Riboflavin transporter RfnT (398 aa).

A run of 12 helical transmembrane segments spans residues 13–35 (ILTI…GGLV), 45–67 (LVTL…AAFF), 74–91 (RNAY…GVIA), 95–117 (IFAA…ASYV), 137–156 (ISWV…QLVI), 166–188 (MFAG…LFML), 220–242 (VAAG…IAMV), 252–274 (ALGI…KLIT), 281–300 (ITAL…LGGF), 305–324 (FWGA…IGAT), 345–367 (FIMF…SSGW), and 372–389 (WLVF…ILRL).

This sequence belongs to the major facilitator superfamily.

The protein localises to the cell membrane. Functionally, transports riboflavin into the cell. This is Riboflavin transporter RfnT from Brucella anthropi (strain ATCC 49188 / DSM 6882 / CCUG 24695 / JCM 21032 / LMG 3331 / NBRC 15819 / NCTC 12168 / Alc 37) (Ochrobactrum anthropi).